Here is a 31-residue protein sequence, read N- to C-terminus: Cytochrome b6-f complex subunit 6 (31 aa).

The helical transmembrane segment at Leu-4–Asn-26 threads the bilayer.

This sequence belongs to the PetL family. The 4 large subunits of the cytochrome b6-f complex are cytochrome b6, subunit IV (17 kDa polypeptide, PetD), cytochrome f and the Rieske protein, while the 4 small subunits are PetG, PetL, PetM and PetN. The complex functions as a dimer.

The protein resides in the plastid. It localises to the chloroplast thylakoid membrane. Its function is as follows. Component of the cytochrome b6-f complex, which mediates electron transfer between photosystem II (PSII) and photosystem I (PSI), cyclic electron flow around PSI, and state transitions. PetL is important for photoautotrophic growth as well as for electron transfer efficiency and stability of the cytochrome b6-f complex. The chain is Cytochrome b6-f complex subunit 6 from Amaranthus caudatus (Love-lies-bleeding).